The primary structure comprises 494 residues: UPF0371 protein SPG_0310 (494 aa).

It belongs to the UPF0371 family.

The sequence is that of UPF0371 protein SPG_0310 from Streptococcus pneumoniae serotype 19F (strain G54).